A 74-amino-acid polypeptide reads, in one-letter code: ATP synthase subunit c (74 aa).

A run of 2 helical transmembrane segments spans residues 8–28 (FIGVGCMAIGMLGAALGVSNI) and 52–72 (IGAGLAEAMGLFSFVIAMLLI).

It belongs to the ATPase C chain family. F-type ATPases have 2 components, F(1) - the catalytic core - and F(0) - the membrane proton channel. F(1) has five subunits: alpha(3), beta(3), gamma(1), delta(1), epsilon(1). F(0) has three main subunits: a(1), b(2) and c(10-14). The alpha and beta chains form an alternating ring which encloses part of the gamma chain. F(1) is attached to F(0) by a central stalk formed by the gamma and epsilon chains, while a peripheral stalk is formed by the delta and b chains.

Its subcellular location is the cell inner membrane. F(1)F(0) ATP synthase produces ATP from ADP in the presence of a proton or sodium gradient. F-type ATPases consist of two structural domains, F(1) containing the extramembraneous catalytic core and F(0) containing the membrane proton channel, linked together by a central stalk and a peripheral stalk. During catalysis, ATP synthesis in the catalytic domain of F(1) is coupled via a rotary mechanism of the central stalk subunits to proton translocation. Its function is as follows. Key component of the F(0) channel; it plays a direct role in translocation across the membrane. A homomeric c-ring of between 10-14 subunits forms the central stalk rotor element with the F(1) delta and epsilon subunits. The protein is ATP synthase subunit c of Rickettsia bellii (strain RML369-C).